The chain runs to 149 residues: Ribonuclease HI (149 aa).

Residues 1–140 (MIIGYFDGLC…AYELVRRGKL (140 aa)) enclose the RNase H type-1 domain. 4 residues coordinate Mg(2+): Asp7, Glu52, Asp76, and Asp125. Asp7, Glu52, Asp76, and Asp125 together coordinate Mn(2+). A disulfide bridge connects residues Cys58 and Cys145.

As to quaternary structure, monomer. Mn(2+) is required as a cofactor. Requires Mg(2+) as cofactor. Co(2+) serves as cofactor. It depends on Ni(2+) as a cofactor. The disulfide bond confers considerable stability to the protein.

The protein resides in the cytoplasm. It carries out the reaction Endonucleolytic cleavage to 5'-phosphomonoester.. Functionally, nuclease that specifically degrades the RNA of RNA-DNA hybrids. Endonucleolytically removes RNA primers from the Okazaki fragments of lagging strand synthesis on its own. In the presence of Mn(2+) or Co(2+) can also cleave an RNA-RNA hybrid; the dsRNase activity is 10- 100-fold lower than RNase H activity. Complements the temperature-sensitive phenotype of an E.coli double rnhA/rnhB (RNase H) disruption mutant. The polypeptide is Ribonuclease HI (rnhA) (Sulfurisphaera tokodaii (strain DSM 16993 / JCM 10545 / NBRC 100140 / 7) (Sulfolobus tokodaii)).